The chain runs to 196 residues: Probable malonic semialdehyde reductase RutE (196 aa).

It belongs to the nitroreductase family. HadB/RutE subfamily. FMN is required as a cofactor.

The catalysed reaction is 3-hydroxypropanoate + NADP(+) = 3-oxopropanoate + NADPH + H(+). May reduce toxic product malonic semialdehyde to 3-hydroxypropionic acid, which is excreted. The polypeptide is Probable malonic semialdehyde reductase RutE (Escherichia coli O6:H1 (strain CFT073 / ATCC 700928 / UPEC)).